The sequence spans 141 residues: Hemoglobin subunit alpha-D (141 aa).

Residues Met-1–Arg-141 form the Globin domain. His-58 and His-87 together coordinate heme b.

Belongs to the globin family. In terms of assembly, heterotetramer of two alpha-D chains and two beta chains. Red blood cells.

In terms of biological role, involved in oxygen transport from the lung to the various peripheral tissues. This chain is Hemoglobin subunit alpha-D (HBAD), found in Phrynops hilarii (Snake-necked turtle).